The following is a 277-amino-acid chain: 2,3,4,5-tetrahydropyridine-2,6-dicarboxylate N-succinyltransferase (277 aa).

Substrate contacts are provided by Arg-106 and Asp-143.

The protein belongs to the transferase hexapeptide repeat family. As to quaternary structure, homotrimer.

It is found in the cytoplasm. It carries out the reaction (S)-2,3,4,5-tetrahydrodipicolinate + succinyl-CoA + H2O = (S)-2-succinylamino-6-oxoheptanedioate + CoA. It functions in the pathway amino-acid biosynthesis; L-lysine biosynthesis via DAP pathway; LL-2,6-diaminopimelate from (S)-tetrahydrodipicolinate (succinylase route): step 1/3. The polypeptide is 2,3,4,5-tetrahydropyridine-2,6-dicarboxylate N-succinyltransferase (Xylella fastidiosa (strain 9a5c)).